The chain runs to 337 residues: Terpene cyclase (337 aa).

The helical transmembrane segment at 5–25 (ASVIFLSLSVLAAVGVWGPFV) threads the bilayer. An N-linked (GlcNAc...) asparagine glycan is attached at Asn-65. 7 helical membrane passes run 72-92 (IAYC…VILC), 111-131 (GLLS…MSFI), 149-169 (ALIL…LNVL), 177-197 (IWGI…ARII), 222-242 (VAGG…LGIF), 267-287 (LQVD…HELI), and 298-318 (LGGL…AAAW).

This sequence belongs to the membrane-bound ascI terpene cyclase family.

The protein localises to the membrane. The protein operates within antifungal biosynthesis. Its function is as follows. Cyclase; part of the gene cluster that mediates the biosynthesis of the tetrahydropyranyl antifungal agent lanomycin that acts as an inhibitor of CYP51 and blocks the ergosterol biosynthesis. The biosynthesis probably begins with the formation of an hexaketide, followed by methionine mediated alkylation of C-2 and C-6, and methylation of the reduced C-3 oxygen, pyran forming reductive ring closure, oxygenation of C-4, beta-keto reduction, enoyl reduction and dehydration of the remaining oxygens, and finally, acylation with glycine to complete the biosynthesis. The sequence is that of Terpene cyclase from Pyrenophora dematioidea (Helminthosporium dematioideum).